Here is a 352-residue protein sequence, read N- to C-terminus: 4-hydroxy-3-methylbut-2-en-1-yl diphosphate synthase (flavodoxin) (352 aa).

Positions 262, 265, 297, and 304 each coordinate [4Fe-4S] cluster.

Belongs to the IspG family. It depends on [4Fe-4S] cluster as a cofactor.

It catalyses the reaction (2E)-4-hydroxy-3-methylbut-2-enyl diphosphate + oxidized [flavodoxin] + H2O + 2 H(+) = 2-C-methyl-D-erythritol 2,4-cyclic diphosphate + reduced [flavodoxin]. It participates in isoprenoid biosynthesis; isopentenyl diphosphate biosynthesis via DXP pathway; isopentenyl diphosphate from 1-deoxy-D-xylulose 5-phosphate: step 5/6. Converts 2C-methyl-D-erythritol 2,4-cyclodiphosphate (ME-2,4cPP) into 1-hydroxy-2-methyl-2-(E)-butenyl 4-diphosphate. This Campylobacter concisus (strain 13826) protein is 4-hydroxy-3-methylbut-2-en-1-yl diphosphate synthase (flavodoxin).